Here is a 263-residue protein sequence, read N- to C-terminus: Phosphonoacetaldehyde hydrolase (263 aa).

The active-site Nucleophile is the Asp-10. Mg(2+) contacts are provided by Asp-10 and Ala-12. Lys-51 acts as the Schiff-base intermediate with substrate in catalysis. A Mg(2+)-binding site is contributed by Asp-184.

The protein belongs to the HAD-like hydrolase superfamily. PhnX family. As to quaternary structure, homodimer. Mg(2+) is required as a cofactor.

It carries out the reaction phosphonoacetaldehyde + H2O = acetaldehyde + phosphate + H(+). Involved in phosphonate degradation. The polypeptide is Phosphonoacetaldehyde hydrolase (Bacteroides fragilis (strain ATCC 25285 / DSM 2151 / CCUG 4856 / JCM 11019 / LMG 10263 / NCTC 9343 / Onslow / VPI 2553 / EN-2)).